Consider the following 557-residue polypeptide: DNA ligase (557 aa).

ATP is bound at residue Glu-251. Lys-253 acts as the N6-AMP-lysine intermediate in catalysis. ATP-binding residues include Arg-258, Arg-273, Glu-303, Phe-342, Arg-418, and Lys-424.

It belongs to the ATP-dependent DNA ligase family. Mg(2+) is required as a cofactor.

The enzyme catalyses ATP + (deoxyribonucleotide)n-3'-hydroxyl + 5'-phospho-(deoxyribonucleotide)m = (deoxyribonucleotide)n+m + AMP + diphosphate.. Its function is as follows. DNA ligase that seals nicks in double-stranded DNA during DNA replication, DNA recombination and DNA repair. This Methanosphaera stadtmanae (strain ATCC 43021 / DSM 3091 / JCM 11832 / MCB-3) protein is DNA ligase.